The following is a 412-amino-acid chain: 2,3-bisphosphoglycerate-independent phosphoglycerate mutase (412 aa).

Belongs to the BPG-independent phosphoglycerate mutase family. A-PGAM subfamily.

It catalyses the reaction (2R)-2-phosphoglycerate = (2R)-3-phosphoglycerate. The protein operates within carbohydrate degradation; glycolysis; pyruvate from D-glyceraldehyde 3-phosphate: step 3/5. In terms of biological role, catalyzes the interconversion of 2-phosphoglycerate and 3-phosphoglycerate. This Pyrococcus horikoshii (strain ATCC 700860 / DSM 12428 / JCM 9974 / NBRC 100139 / OT-3) protein is 2,3-bisphosphoglycerate-independent phosphoglycerate mutase (apgM).